The chain runs to 73 residues: UPF0435 protein lwe1727 (73 aa).

Belongs to the UPF0435 family.

The polypeptide is UPF0435 protein lwe1727 (Listeria welshimeri serovar 6b (strain ATCC 35897 / DSM 20650 / CCUG 15529 / CIP 8149 / NCTC 11857 / SLCC 5334 / V8)).